A 426-amino-acid polypeptide reads, in one-letter code: Serine hydroxymethyltransferase (426 aa).

Residues L118 and 122–124 (GHL) contribute to the (6S)-5,6,7,8-tetrahydrofolate site. K227 is subject to N6-(pyridoxal phosphate)lysine. The segment at 342 to 368 (NTIPNDPKPPTQASGIRLGTPAMTTRG) is disordered.

This sequence belongs to the SHMT family. Homodimer. Pyridoxal 5'-phosphate is required as a cofactor.

It localises to the cytoplasm. It carries out the reaction (6R)-5,10-methylene-5,6,7,8-tetrahydrofolate + glycine + H2O = (6S)-5,6,7,8-tetrahydrofolate + L-serine. It participates in one-carbon metabolism; tetrahydrofolate interconversion. Its pathway is amino-acid biosynthesis; glycine biosynthesis; glycine from L-serine: step 1/1. Catalyzes the reversible interconversion of serine and glycine with tetrahydrofolate (THF) serving as the one-carbon carrier. This reaction serves as the major source of one-carbon groups required for the biosynthesis of purines, thymidylate, methionine, and other important biomolecules. Also exhibits THF-independent aldolase activity toward beta-hydroxyamino acids, producing glycine and aldehydes, via a retro-aldol mechanism. This is Serine hydroxymethyltransferase from Thermomicrobium roseum (strain ATCC 27502 / DSM 5159 / P-2).